Consider the following 636-residue polypeptide: Methionine--tRNA ligase (636 aa).

The 'HIGH' region signature appears at 12–22 (YYVNGDPHVGS). Zn(2+) contacts are provided by cysteine 127, cysteine 130, cysteine 145, and cysteine 148. The 'KMSKS' region signature appears at 298 to 302 (KMSKS). Position 301 (lysine 301) interacts with ATP. The tRNA-binding domain occupies 535–636 (EFNKIEIKVV…KTVEAGAIVS (102 aa)).

It belongs to the class-I aminoacyl-tRNA synthetase family. MetG type 2A subfamily. Homodimer. Zn(2+) is required as a cofactor.

Its subcellular location is the cytoplasm. The enzyme catalyses tRNA(Met) + L-methionine + ATP = L-methionyl-tRNA(Met) + AMP + diphosphate. Its function is as follows. Is required not only for elongation of protein synthesis but also for the initiation of all mRNA translation through initiator tRNA(fMet) aminoacylation. This is Methionine--tRNA ligase (metG) from Fusobacterium nucleatum subsp. nucleatum (strain ATCC 25586 / DSM 15643 / BCRC 10681 / CIP 101130 / JCM 8532 / KCTC 2640 / LMG 13131 / VPI 4355).